Reading from the N-terminus, the 432-residue chain is Probable anion transporter 5 (432 aa).

An N-terminal signal peptide occupies residues 1–23 (MKLSNIPQRYVIVFLTFLSTCVC). Helical transmembrane passes span 50–70 (TILSTFFVGYACSQVPGGWAA), 78–98 (VLLLSFVLWSSTCFLVPLDPN), 101–121 (GLLVVARLLVGVAQGFIFPSI), 140–160 (ITTSGMYLGAALGMWLLPALV), 164–184 (GPESVFLAEALAGVIWSLLWI), 229–249 (LPVWAIVVNNFTFHYALYVLM), 273–293 (VPYLNMFVFSIVGGFIADYLI), 305–325 (KFLNTVGFLIASAALMVLPMF), 331–351 (VILCSSVALGFLALGRAGFAV), 360–380 (YAGIVMGVSNTAGTLAGIIGV), and 405–425 (VVFFIPGLLCIFSSVVFLLFS).

This sequence belongs to the major facilitator superfamily. Sodium/anion cotransporter (TC 2.A.1.14) family. Ubiquitous.

It localises to the golgi apparatus membrane. Inorganic phosphate and probable anion transporter. The sequence is that of Probable anion transporter 5 (ANTR5) from Arabidopsis thaliana (Mouse-ear cress).